The sequence spans 104 residues: uncharacterized protein (104 aa).

A run of 2 helical transmembrane segments spans residues 47–67 and 72–92; these read IDHRTWHIVGLCIFGFLLAML and VGHVEDWFLITFAAVVLFVLA.

To M.leprae ML1584.

It is found in the cell membrane. This is an uncharacterized protein from Mycobacterium tuberculosis (strain CDC 1551 / Oshkosh).